The sequence spans 377 residues: Endolytic peptidoglycan transglycosylase RlpA (377 aa).

A signal peptide spans 1 to 19 (MHKQLPVICVAAGIVLLAA). Cysteine 20 carries the N-palmitoyl cysteine lipid modification. Cysteine 20 is lipidated: S-diacylglycerol cysteine. Residues 196–277 (LPPRPDLSGG…PVSAPVTAPA (82 aa)) are disordered. Low complexity-rich tracts occupy residues 208 to 218 (SASSAPAQPQG) and 264 to 277 (PQTA…TAPA). The SPOR domain occupies 300–376 (AAASGRFVVQ…AQLQSFIASA (77 aa)).

The protein belongs to the RlpA family.

It localises to the cell membrane. In terms of biological role, lytic transglycosylase with a strong preference for naked glycan strands that lack stem peptides. This chain is Endolytic peptidoglycan transglycosylase RlpA, found in Salmonella typhi.